The primary structure comprises 247 residues: 5'-nucleotidase SurE (247 aa).

A divalent metal cation is bound by residues aspartate 8, aspartate 9, serine 39, and asparagine 91.

This sequence belongs to the SurE nucleotidase family. A divalent metal cation serves as cofactor.

It localises to the cytoplasm. It carries out the reaction a ribonucleoside 5'-phosphate + H2O = a ribonucleoside + phosphate. In terms of biological role, nucleotidase that shows phosphatase activity on nucleoside 5'-monophosphates. This is 5'-nucleotidase SurE from Pelobacter propionicus (strain DSM 2379 / NBRC 103807 / OttBd1).